The following is an 88-amino-acid chain: Exodeoxyribonuclease 7 small subunit (88 aa).

Belongs to the XseB family. Heterooligomer composed of large and small subunits.

It is found in the cytoplasm. The enzyme catalyses Exonucleolytic cleavage in either 5'- to 3'- or 3'- to 5'-direction to yield nucleoside 5'-phosphates.. Bidirectionally degrades single-stranded DNA into large acid-insoluble oligonucleotides, which are then degraded further into small acid-soluble oligonucleotides. The polypeptide is Exodeoxyribonuclease 7 small subunit (Bordetella petrii (strain ATCC BAA-461 / DSM 12804 / CCUG 43448)).